The following is a 328-amino-acid chain: Nickel import system permease protein NikB (328 aa).

6 helical membrane passes run 11–31 (LMQM…LMKL), 104–124 (LLIS…LGII), 139–159 (VIST…LLFI), 170–190 (ILSQ…AYII), 229–249 (ILPI…GTVV), and 279–299 (VLFI…LTLL). Residues 100–297 (APITLLISFS…IINTIADLLT (198 aa)) form the ABC transmembrane type-1 domain.

Belongs to the binding-protein-dependent transport system permease family. OppBC subfamily. In terms of assembly, the complex is composed of two ATP-binding proteins (NikD and NikE), two transmembrane proteins (NikB and NikC) and a solute-binding protein (NikA).

The protein localises to the cell membrane. Part of the ABC transporter complex NikABCDE (Opp2) involved in nickel import. Probably responsible for the translocation of the substrate across the membrane. The chain is Nickel import system permease protein NikB from Staphylococcus aureus (strain MSSA476).